Consider the following 133-residue polypeptide: Interleukin-4 (133 aa).

Residues 1–24 form the signal peptide; it reads MGLTYQLIPALVCLLAFTSTFVHG. N-linked (GlcNAc...) asparagine glycans are attached at residues Asn28, Asn45, Asn62, Asn84, Asn96, and Asn102. Cystine bridges form between Cys48/Cys85 and Cys70/Cys113.

This sequence belongs to the IL-4/IL-13 family.

The protein resides in the secreted. Functionally, participates in at least several B-cell activation processes as well as of other cell types. It is a costimulator of DNA-synthesis. It induces the expression of class II MHC molecules on resting B-cells. It enhances both secretion and cell surface expression of IgE and IgG1. It also regulates the expression of the low affinity Fc receptor for IgE (CD23) on both lymphocytes and monocytes. Positively regulates IL31RA expression in macrophages. Stimulates autophagy in dendritic cells by interfering with mTORC1 signaling and through the induction of RUFY4. The sequence is that of Interleukin-4 (IL4) from Felis catus (Cat).